The following is an 875-amino-acid chain: Alanine--tRNA ligase (875 aa).

Zn(2+)-binding residues include H564, H568, C666, and H670.

This sequence belongs to the class-II aminoacyl-tRNA synthetase family. Homotetramer. Zn(2+) is required as a cofactor.

It is found in the cytoplasm. The catalysed reaction is tRNA(Ala) + L-alanine + ATP = L-alanyl-tRNA(Ala) + AMP + diphosphate. In terms of biological role, catalyzes the attachment of alanine to tRNA(Ala) in a two-step reaction: alanine is first activated by ATP to form Ala-AMP and then transferred to the acceptor end of tRNA(Ala). Also edits incorrectly charged Ser-tRNA(Ala) and Gly-tRNA(Ala) via its editing domain. In Citrobacter koseri (strain ATCC BAA-895 / CDC 4225-83 / SGSC4696), this protein is Alanine--tRNA ligase.